The sequence spans 529 residues: Delayed-rectifier potassium channel regulatory subunit KCNS1 (529 aa).

Residues 1-217 (MLMLLVRGTR…LTMENPGYSL (217 aa)) lie on the Cytoplasmic side of the membrane. The chain crosses the membrane as a helical span at residues 218 to 239 (PSKLFSCVSISVVLASIAAMCI). The Extracellular segment spans residues 240 to 270 (HSLPEYQAREAAAAVAAVAAGRSAEGVRDDP). Residues 271–293 (VLRRLEYFCIAWFSFEVSSRLLL) traverse the membrane as a helical segment. Over 294–304 (APSTRNFFCHP) the chain is Cytoplasmic. Residues 305 to 322 (LNLIDIVSVLPFYLTLLA) traverse the membrane as a helical segment. Residues 323 to 340 (GAALGDHGGTGGKEFGHL) lie on the Extracellular side of the membrane. Residues 341–361 (GKVVQVFRLMRIFRVLKLARH) traverse the membrane as a helical; Voltage-sensor segment. The Cytoplasmic segment spans residues 362-376 (STGLRSLGATLKHSY). A helical transmembrane segment spans residues 377–398 (REVGILLLYLAVGVSVFSGVAY). The Extracellular portion of the chain corresponds to 399–411 (TAEKEEHVGFDTI). The segment at residues 412 to 423 (PACWWWGTVSMT) is an intramembrane region (helical). The short motif at 424-429 (TVGYGD) is the Selectivity filter element. Residues 424 to 431 (TVGYGDVV) lie within the membrane without spanning it. At 432-438 (PVTVAGK) the chain is on the extracellular side. The helical transmembrane segment at 439 to 467 (LAASGCILGGILVVALPITIIFNKFSHFY) threads the bilayer. The Cytoplasmic segment spans residues 468–529 (RRQKALEAAV…PSEPPHSQMY (62 aa)). The segment at 494–529 (GVSEASLETSRETSQEGRSADLETQVPSEPPHSQMY) is disordered. A compositionally biased stretch (basic and acidic residues) spans 502–514 (TSRETSQEGRSAD).

This sequence belongs to the potassium channel family. S (TC 1.A.1.2) subfamily. Kv9.1/KCNS1 sub-subfamily. As to quaternary structure, heterotetramer with KCNB1. Heterotetramer with KCNB2. Does not form homomultimers.

It localises to the cell membrane. In terms of biological role, potassium channel regulatory subunit that modulate the delayed rectifier voltage-gated potassium channel activity of KCNB1 and KCNB2 by altering their kinetics, expression levels, and shifting the half-inactivation potential to more polarized values. While it does not form functional channels on its own, it can form functional heterotetrameric channels with KCNB1 and KCNB2. Each regulatory subunit has unique regulatory properties that can lead to extensive inhibition, significant changes in kinetics, and/or substantial shifts in the voltage dependencies of the inactivation process. The sequence is that of Delayed-rectifier potassium channel regulatory subunit KCNS1 from Aotus nancymaae (Ma's night monkey).